Here is a 585-residue protein sequence, read N- to C-terminus: A-type ATP synthase subunit A (585 aa).

237-244 (GPFGSGKT) serves as a coordination point for ATP.

The protein belongs to the ATPase alpha/beta chains family. As to quaternary structure, has multiple subunits with at least A(3), B(3), C, D, E, F, H, I and proteolipid K(x).

It localises to the cell membrane. It catalyses the reaction ATP + H2O + 4 H(+)(in) = ADP + phosphate + 5 H(+)(out). Component of the A-type ATP synthase that produces ATP from ADP in the presence of a proton gradient across the membrane. The A chain is the catalytic subunit. In Natronomonas pharaonis (strain ATCC 35678 / DSM 2160 / CIP 103997 / JCM 8858 / NBRC 14720 / NCIMB 2260 / Gabara) (Halobacterium pharaonis), this protein is A-type ATP synthase subunit A.